Reading from the N-terminus, the 408-residue chain is S-adenosylmethionine:tRNA ribosyltransferase-isomerase (408 aa).

This sequence belongs to the QueA family. In terms of assembly, monomer.

The protein resides in the cytoplasm. The enzyme catalyses 7-aminomethyl-7-carbaguanosine(34) in tRNA + S-adenosyl-L-methionine = epoxyqueuosine(34) in tRNA + adenine + L-methionine + 2 H(+). It participates in tRNA modification; tRNA-queuosine biosynthesis. Its function is as follows. Transfers and isomerizes the ribose moiety from AdoMet to the 7-aminomethyl group of 7-deazaguanine (preQ1-tRNA) to give epoxyqueuosine (oQ-tRNA). The sequence is that of S-adenosylmethionine:tRNA ribosyltransferase-isomerase from Trichormus variabilis (strain ATCC 29413 / PCC 7937) (Anabaena variabilis).